The following is a 549-amino-acid chain: Glucose-6-phosphate isomerase (549 aa).

The active-site Proton donor is the E355. Residues H386 and K514 contribute to the active site.

The protein belongs to the GPI family.

The protein resides in the cytoplasm. It catalyses the reaction alpha-D-glucose 6-phosphate = beta-D-fructose 6-phosphate. Its pathway is carbohydrate biosynthesis; gluconeogenesis. It participates in carbohydrate degradation; glycolysis; D-glyceraldehyde 3-phosphate and glycerone phosphate from D-glucose: step 2/4. Its function is as follows. Catalyzes the reversible isomerization of glucose-6-phosphate to fructose-6-phosphate. This Pectobacterium carotovorum subsp. carotovorum (strain PC1) protein is Glucose-6-phosphate isomerase.